A 259-amino-acid polypeptide reads, in one-letter code: Small ribosomal subunit protein uS2 (259 aa).

Belongs to the universal ribosomal protein uS2 family.

This is Small ribosomal subunit protein uS2 from Streptococcus pneumoniae serotype 4 (strain ATCC BAA-334 / TIGR4).